The following is a 348-amino-acid chain: L-threonine 3-dehydrogenase (348 aa).

Cys42 serves as a coordination point for Zn(2+). Active-site charge relay system residues include Thr44 and His47. Zn(2+)-binding residues include His67, Glu68, Cys97, Cys100, Cys103, and Cys111. NAD(+) is bound by residues Leu179, Glu199, Arg204, 266-268 (LGL), and 291-292 (IT).

It belongs to the zinc-containing alcohol dehydrogenase family. As to quaternary structure, homotetramer. Zn(2+) is required as a cofactor.

It is found in the cytoplasm. It catalyses the reaction L-threonine + NAD(+) = (2S)-2-amino-3-oxobutanoate + NADH + H(+). It functions in the pathway amino-acid degradation; L-threonine degradation via oxydo-reductase pathway; glycine from L-threonine: step 1/2. In terms of biological role, catalyzes the NAD(+)-dependent oxidation of L-threonine to 2-amino-3-ketobutyrate. To a lesser extent, also catalyzes the oxidation of L-serine, D-threonine, butan-2,3-diol, butan-1,2-diol, and propan-1,2-diol and cannot oxidize other L-amino acids. Cannot utilize NADP(H) instead of NAD(H). This Pyrococcus furiosus (strain ATCC 43587 / DSM 3638 / JCM 8422 / Vc1) protein is L-threonine 3-dehydrogenase.